The sequence spans 277 residues: Peptide deformylase 1A, chloroplastic (277 aa).

Zn(2+) contacts are provided by Cys-196 and His-238. Glu-239 is a catalytic residue. His-242 provides a ligand contact to Zn(2+).

This sequence belongs to the polypeptide deformylase family. It depends on Zn(2+) as a cofactor.

The protein localises to the plastid. The protein resides in the chloroplast stroma. It carries out the reaction N-terminal N-formyl-L-methionyl-[peptide] + H2O = N-terminal L-methionyl-[peptide] + formate. Functionally, removes the formyl group from the N-terminal Met of newly synthesized proteins. This is Peptide deformylase 1A, chloroplastic (PDF1A) from Solanum lycopersicum (Tomato).